We begin with the raw amino-acid sequence, 116 residues long: Large ribosomal subunit protein bL19 (116 aa).

This sequence belongs to the bacterial ribosomal protein bL19 family.

Functionally, this protein is located at the 30S-50S ribosomal subunit interface and may play a role in the structure and function of the aminoacyl-tRNA binding site. In Mannheimia succiniciproducens (strain KCTC 0769BP / MBEL55E), this protein is Large ribosomal subunit protein bL19.